Reading from the N-terminus, the 746-residue chain is GTPase-activating protein GYP7 (746 aa).

Phosphoserine is present on residues serine 265 and serine 339. In terms of domain architecture, Rab-GAP TBC spans 385–633 (LENDSLRGKV…HIWENFWTFY (249 aa)). The tract at residues 470–505 (TIDGLPPPPQQLPANENNSTSPESANDESDDADDGV) is disordered. A compositionally biased stretch (polar residues) spans 481–491 (LPANENNSTSP).

Its subcellular location is the cytoplasm. In terms of biological role, GTPase-activating protein (GAP) that most effectively accelerates the intrinsic GTPase activity of Ypt/Rab-type GTPase YPT7 involved in vacuole docking and fusion. It is also active, but to a lesser extent, on YPT31, YPT32, YPT1, YPT6 and SEC4. Provides a catalytic arginine (arginine finger) in trans to accelerate the GTP hydrolysis rate of the substrate GTPase. In Saccharomyces cerevisiae (strain ATCC 204508 / S288c) (Baker's yeast), this protein is GTPase-activating protein GYP7 (GYP7).